The primary structure comprises 214 residues: Protein PsaE (214 aa).

The N-terminal stretch at 1–24 (MSHCVVLNKLESVLIIGDSRYALS) is a signal peptide. The ompR/PhoB-type DNA-binding region spans 1–94 (MSHCVVLNKL…YKNEGYSYQK (94 aa)).

Required for expression of pH 6 antigen. In Yersinia pseudotuberculosis serotype I (strain IP32953), this protein is Protein PsaE (psaE).